The chain runs to 550 residues: Arginine--tRNA ligase (550 aa).

Positions 130–140 (ANPTGPIHIGG) match the 'HIGH' region motif.

The protein belongs to the class-I aminoacyl-tRNA synthetase family. In terms of assembly, monomer.

It localises to the cytoplasm. The catalysed reaction is tRNA(Arg) + L-arginine + ATP = L-arginyl-tRNA(Arg) + AMP + diphosphate. In Mycobacterium tuberculosis (strain CDC 1551 / Oshkosh), this protein is Arginine--tRNA ligase (argS).